The primary structure comprises 281 residues: Tumor necrosis factor ligand superfamily member 6 (281 aa).

Residues 1–80 lie on the Cytoplasmic side of the membrane; it reads MQQPFNYPYP…LKKRGNHSTG (80 aa). The segment at 20 to 71 is disordered; the sequence is SSPWAPPGTVLPCPTSVPRRPGQRRPPPPPPPPPLPPPPPPPPLPPLPLPPL. Residues 43-70 are compositionally biased toward pro residues; the sequence is RRPPPPPPPPPLPPPPPPPPLPPLPLPP. Residues 81–102 form a helical; Signal-anchor for type II membrane protein membrane-spanning segment; it reads LCLLVMFFMVLVALVGLGLGMF. Over 103–281 the chain is Extracellular; the sequence is QLFHLQKELA…SQTFFGLYKL (179 aa). Polar residues predominate over residues 118–128; sequence TSQMHTASSLE. The interval 118–142 is disordered; it reads TSQMHTASSLEKQIGHPSPPPEKKE. Residues 145-281 form the THD domain; that stretch reads KVAHLTGKSN…SQTFFGLYKL (137 aa). N-linked (GlcNAc...) asparagine glycosylation is present at asparagine 184. Residues cysteine 202 and cysteine 233 are joined by a disulfide bond. Asparagine 250 and asparagine 260 each carry an N-linked (GlcNAc...) asparagine glycan.

The protein belongs to the tumor necrosis factor family. As to quaternary structure, homotrimer. Interacts with ARHGAP9, BAIAP2L1, BTK, CACNB3, CACNB4, CRK, DLG2, DNMBP, DOCK4, EPS8L3, FGR, FYB1, FYN, HCK, ITK, ITSN2, KALRN, LYN, MACC1, MIA, MPP4, MYO15A, NCF1, NCK1, NCK2, NCKIPSD, OSTF1, PIK3R1, PSTPIP1, RIMBP3C, SAMSN1, SH3GL3, SH3PXD2B, SH3PXD2A, SH3RF2, SKAP2, SNX33, SNX9, SORBS3, SPTA1, SRC, SRGAP1, SRGAP2, SRGAP3, TEC, TJP3 and YES1. In terms of processing, the soluble form derives from the membrane form by proteolytic processing. The membrane-bound form undergoes two successive intramembrane proteolytic cleavages. The first one is processed by ADAM10 producing an N-terminal fragment, which lacks the receptor-binding extracellular domain. This ADAM10-processed FasL (FasL APL) remnant form is still membrane anchored and further processed by SPPL2A that liberates the FasL intracellular domain (FasL ICD). FasL shedding by ADAM10 is a prerequisite for subsequent intramembrane cleavage by SPPL2A in T-cells. Post-translationally, N-glycosylated. Glycosylation enhances apoptotic activity. Phosphorylated by FGR on tyrosine residues; this is required for ubiquitination and subsequent internalization. In terms of processing, monoubiquitinated.

Its subcellular location is the cell membrane. It is found in the cytoplasmic vesicle lumen. It localises to the lysosome lumen. The protein localises to the secreted. The protein resides in the nucleus. Functionally, cytokine that binds to TNFRSF6/FAS, a receptor that transduces the apoptotic signal into cells. Involved in cytotoxic T-cell-mediated apoptosis, natural killer cell-mediated apoptosis and in T-cell development. Initiates fratricidal/suicidal activation-induced cell death (AICD) in antigen-activated T-cells contributing to the termination of immune responses. TNFRSF6/FAS-mediated apoptosis also has a role in the induction of peripheral tolerance. Binds to TNFRSF6B/DcR3, a decoy receptor that blocks apoptosis. Induces FAS-mediated activation of NF-kappa-B, initiating non-apoptotic signaling pathways. Can induce apoptosis but does not appear to be essential for this process. In terms of biological role, cytoplasmic form induces gene transcription inhibition. This chain is Tumor necrosis factor ligand superfamily member 6 (FASLG), found in Homo sapiens (Human).